The following is a 193-amino-acid chain: Dirigent protein 11 (193 aa).

A signal peptide spans Met1–Ser33. Residues Asn78 and Asn136 are each glycosylated (N-linked (GlcNAc...) asparagine).

This sequence belongs to the plant dirigent protein family. In terms of assembly, homodimer.

It localises to the secreted. It is found in the extracellular space. The protein localises to the apoplast. Dirigent proteins impart stereoselectivity on the phenoxy radical-coupling reaction, yielding optically active lignans from two molecules of coniferyl alcohol in the biosynthesis of lignans, flavonolignans, and alkaloids and thus plays a central role in plant secondary metabolism. The chain is Dirigent protein 11 (DIR11) from Arabidopsis thaliana (Mouse-ear cress).